A 147-amino-acid chain; its full sequence is uncharacterized protein (147 aa).

The HTH LytTR-type domain occupies 44–147 (LVGYIDKEIH…LKSIKERLSI (104 aa)).

The protein localises to the cytoplasm. This is an uncharacterized protein from Staphylococcus aureus (strain MRSA252).